The primary structure comprises 310 residues: Transcription initiation factor IIB (310 aa).

The segment at 9–41 (EKETKCPECGSDDLRGDYERAEIVCGKCGLVID) adopts a TFIIB-type zinc-finger fold. Positions 14, 17, 33, and 36 each coordinate Zn(2+). 2 consecutive repeat copies span residues 127-210 (SELD…TREL) and 221-302 (DYVP…ELTE).

This sequence belongs to the TFIIB family.

Stabilizes TBP binding to an archaeal box-A promoter. Also responsible for recruiting RNA polymerase II to the pre-initiation complex (DNA-TBP-TFIIB). The chain is Transcription initiation factor IIB from Methanothermobacter thermautotrophicus (strain ATCC 29096 / DSM 1053 / JCM 10044 / NBRC 100330 / Delta H) (Methanobacterium thermoautotrophicum).